Reading from the N-terminus, the 321-residue chain is UDP-N-acetylenolpyruvoylglucosamine reductase (321 aa).

One can recognise an FAD-binding PCMH-type domain in the interval 36-203 (FRAGGLAEVM…TGALFEGYPE (168 aa)). The active site involves Arg183. Ser232 serves as the catalytic Proton donor. The active site involves Glu302.

The protein belongs to the MurB family. It depends on FAD as a cofactor.

It localises to the cytoplasm. The catalysed reaction is UDP-N-acetyl-alpha-D-muramate + NADP(+) = UDP-N-acetyl-3-O-(1-carboxyvinyl)-alpha-D-glucosamine + NADPH + H(+). Its pathway is cell wall biogenesis; peptidoglycan biosynthesis. Functionally, cell wall formation. In Agrobacterium fabrum (strain C58 / ATCC 33970) (Agrobacterium tumefaciens (strain C58)), this protein is UDP-N-acetylenolpyruvoylglucosamine reductase.